Here is a 216-residue protein sequence, read N- to C-terminus: Germin-like protein 1-1 (216 aa).

The signal sequence occupies residues 1-24; it reads MARVQLWVAAACAVVLALAAPSLA. Cys-34 and Cys-49 are joined by a disulfide. Residues Asn-52 and Asn-76 are each glycosylated (N-linked (GlcNAc...) asparagine). Residues 61 to 209 enclose the Cupin type-1 domain; it reads AGLKNPGNTN…AFRVDVPQVD (149 aa). Mn(2+) is bound by residues His-109, His-111, Glu-116, and His-155.

Belongs to the germin family. In terms of assembly, oligomer (believed to be a pentamer but probably hexamer).

Its subcellular location is the secreted. The protein resides in the extracellular space. The protein localises to the apoplast. Its function is as follows. May play a role in plant defense. Probably has no oxalate oxidase activity even if the active site is conserved. This chain is Germin-like protein 1-1 (GER4), found in Oryza sativa subsp. japonica (Rice).